The chain runs to 508 residues: Cytochrome P450 monooxygenase aflV (508 aa).

The helical transmembrane segment at 18 to 38 threads the bilayer; the sequence is LTWWFLAVGGAWIVSKIIKIL. Residues asparagine 192, asparagine 209, asparagine 302, and asparagine 408 are each glycosylated (N-linked (GlcNAc...) asparagine). Residue cysteine 453 coordinates heme.

This sequence belongs to the cytochrome P450 family. Heme is required as a cofactor.

The protein localises to the membrane. Its pathway is mycotoxin biosynthesis; aflatoxin biosynthesis. Its function is as follows. Cytochrome P450 monooxygenase; part of the gene cluster that mediates the biosynthesis of aflatoxins, a group of polyketide-derived furanocoumarins, and part of the most toxic and carcinogenic compounds among the known mycotoxins. The four major aflatoxins produced by A.parasiticus are aflatoxin B1 (AFB1), aflatoxin B2 (AFB2), aflatoxin G1 (AFG1) and aflatoxin G2 (AFG2). The role of the cytochrome P450 monooxygenase aflV in aflatoxin biosynthesis has still to be characterized. The biosynthesis of aflatoxins begins with the norsolorinic acid synthase aflC that combines a hexanoyl starter unit produced by the fatty acid synthase aflA/aflB and 7 malonyl-CoA extender units to synthesize the precursor NOR. The second step is the conversion of NOR to averantin and requires the norsolorinic acid ketoreductase aflD, which catalyzes the dehydration of norsolorinic acid to form (1'S)-averantin. The norsolorinic acid reductases aflE and aflF may also play a role in the conversion of NOR to AVN. The cytochrome P450 monooxygenase aflG then catalyzes the hydroxylation of AVN to 5'hydroxyaverantin (HAVN). The next step is performed by the 5'-hydroxyaverantin dehydrogenase aflH that transforms HAVN to 5'-oxoaverantin (OAVN) which is further converted to averufin (AVF) by aflK that plays a dual role in the pathway, as a 5'-oxoaverantin cyclase that mediates conversion of 5'-oxoaverantin, as well as a versicolorin B synthase in a later step in the pathway. The averufin oxidase aflI catalyzes the conversion of AVF to versiconal hemiacetal acetate (VHA). VHA is then the substrate for the versiconal hemiacetal acetate esterase aflJ to yield versiconal (VAL). Versicolorin B synthase aflK then converts VAL to versicolorin B (VERB) by closing the bisfuran ring of aflatoxin which is required for DNA-binding, thus giving to aflatoxin its activity as a mutagen. Then, the activity of the versicolorin B desaturase aflL leads to versicolorin A (VERA). A branch point starts from VERB since it can also be converted to dihydrodemethylsterigmatocystin (DMDHST), probably also by aflL, VERA being a precursor for aflatoxins B1 and G1, and DMDHST for aflatoxins B2 and G2. Next, the versicolorin reductase aflM and the cytochrome P450 monooxygenase aflN are involved in conversion of VERA to demethylsterigmatocystin (DMST). AflX and aflY seem also involved in this step, through probable aflX-mediated epoxide ring-opening step following versicolorin A oxidation and aflY-mediated Baeyer-Villiger oxidation required for the formation of the xanthone ring. The methyltransferase aflO then leads to the modification of DMST to sterigmatocystin (ST), and of DMDHST to dihydrosterigmatocystin (DHST). Both ST and DHST are then substrates of the O-methyltransferase aflP to yield O-methylsterigmatocystin (OMST) and dihydro-O-methylsterigmatocystin (DHOMST), respectively. Finally OMST is converted to aflatoxins B1 and G1, and DHOMST to aflatoxins B2 and G2, via the action of several enzymes including O-methylsterigmatocystin oxidoreductase aflQ, the cytochrome P450 monooxygenase aflU, but also the NADH-dependent flavin oxidoreductase nadA which is specifically required for the synthesis of AFG1. This is Cytochrome P450 monooxygenase aflV from Aspergillus parasiticus (strain ATCC 56775 / NRRL 5862 / SRRC 143 / SU-1).